We begin with the raw amino-acid sequence, 151 residues long: Endoribonuclease YbeY (151 aa).

Residues H108, H112, and D118 each contribute to the Zn(2+) site.

The protein belongs to the endoribonuclease YbeY family. It depends on Zn(2+) as a cofactor.

It is found in the cytoplasm. In terms of biological role, single strand-specific metallo-endoribonuclease involved in late-stage 70S ribosome quality control and in maturation of the 3' terminus of the 16S rRNA. The chain is Endoribonuclease YbeY from Porphyromonas gingivalis (strain ATCC BAA-308 / W83).